The primary structure comprises 233 residues: Phycoerythrobilin synthase (233 aa).

Belongs to the HY2 family.

It catalyses the reaction (3Z)-phycoerythrobilin + 2 oxidized 2[4Fe-4S]-[ferredoxin] = biliverdin IXalpha + 2 reduced 2[4Fe-4S]-[ferredoxin] + 4 H(+). Functionally, plays a role in phycoerythrobilin biosynthesis, the red pigment chromophore photosynthetically active biliproteins of the host cyanobacteria. Uses a four-electron reduction to carry out the reactions catalyzed by two enzymes (EC 1.3.7.2 and EC 1.3.7.3) in host. The chain is Phycoerythrobilin synthase (pebS) from Prochlorococcus.